Here is a 238-residue protein sequence, read N- to C-terminus: uncharacterized protein (238 aa).

One can recognise an S4 RNA-binding domain in the interval 1-64; sequence MRLDKYLSKS…KPKKNVYLML (64 aa). Catalysis depends on Asp103, which acts as the Nucleophile.

The protein belongs to the pseudouridine synthase RsuA family.

The enzyme catalyses a uridine in RNA = a pseudouridine in RNA. This is an uncharacterized protein from Aquifex aeolicus (strain VF5).